The primary structure comprises 251 residues: uncharacterized protein (251 aa).

One can recognise an AMMECR1 domain in the interval 21–246 (KGSSPFAFYA…ITYEEFNKQL (226 aa)).

This is an uncharacterized protein from Saccharomyces cerevisiae (strain ATCC 204508 / S288c) (Baker's yeast).